Here is a 401-residue protein sequence, read N- to C-terminus: Protein-glutamate methylesterase/protein-glutamine glutaminase (401 aa).

The 119-residue stretch at 16 to 134 (RVLVIDDSAV…LAGAEEFRRD (119 aa)) folds into the Response regulatory domain. D67 bears the 4-aspartylphosphate mark. The tract at residues 146 to 208 (PIPPVPTQRD…PQGRGTPRNT (63 aa)) is disordered. Low complexity-rich tracts occupy residues 166-176 (AAPGAPVARSI) and 185-199 (SAPA…AQPP). Residues 205–400 (PRNTARPEII…PGIVRRAKGG (196 aa)) enclose the CheB-type methylesterase domain. Catalysis depends on residues S219, H246, and D342.

The protein belongs to the CheB family. In terms of processing, phosphorylated by CheA. Phosphorylation of the N-terminal regulatory domain activates the methylesterase activity.

It localises to the cytoplasm. The enzyme catalyses [protein]-L-glutamate 5-O-methyl ester + H2O = L-glutamyl-[protein] + methanol + H(+). The catalysed reaction is L-glutaminyl-[protein] + H2O = L-glutamyl-[protein] + NH4(+). Involved in chemotaxis. Part of a chemotaxis signal transduction system that modulates chemotaxis in response to various stimuli. Catalyzes the demethylation of specific methylglutamate residues introduced into the chemoreceptors (methyl-accepting chemotaxis proteins or MCP) by CheR. Also mediates the irreversible deamidation of specific glutamine residues to glutamic acid. In Maricaulis maris (strain MCS10) (Caulobacter maris), this protein is Protein-glutamate methylesterase/protein-glutamine glutaminase.